Reading from the N-terminus, the 290-residue chain is Pyridoxal kinase PdxY (290 aa).

Residues S12 and 47–48 (TQ) contribute to the substrate site. ATP-binding positions include D114, E151, K184, and 211-214 (RPLL). D225 lines the substrate pocket.

It belongs to the pyridoxine kinase family. PdxY subfamily. In terms of assembly, homodimer. It depends on Mg(2+) as a cofactor.

The catalysed reaction is pyridoxal + ATP = pyridoxal 5'-phosphate + ADP + H(+). Its pathway is cofactor metabolism; pyridoxal 5'-phosphate salvage; pyridoxal 5'-phosphate from pyridoxal: step 1/1. Functionally, pyridoxal kinase involved in the salvage pathway of pyridoxal 5'-phosphate (PLP). Catalyzes the phosphorylation of pyridoxal to PLP. The protein is Pyridoxal kinase PdxY of Pseudomonas entomophila (strain L48).